Here is a 178-residue protein sequence, read N- to C-terminus: PRA1 family protein 2 (178 aa).

The Cytoplasmic portion of the chain corresponds to 1–41; sequence MSEVRLPPLRALDDFVLGSARLAAPDPGDPQRWCHRVINNL. Residues 42–62 form a helical membrane-spanning segment; it reads LYYQTNYLLCFGISLALAGYI. Residues 63 to 64 are Extracellular-facing; sequence RP. Residues 65 to 85 form a helical membrane-spanning segment; the sequence is LHTLLSALVVVVALGVLVWAA. The Cytoplasmic portion of the chain corresponds to 86–96; the sequence is ETRAAVRRCRR. A helical transmembrane segment spans residues 97–119; that stretch reads SHPAACLAAVLAISLFILWAVGG. At 120 to 122 the chain is on the extracellular side; the sequence is AFT. Residues 123–140 form a helical membrane-spanning segment; that stretch reads FLLSITAPVFLILLHASL. Residues 141–178 lie on the Cytoplasmic side of the membrane; it reads RLRNLKNKIENKIESIGLKRTPMGLLLEALGQEQEAGS.

Belongs to the PRA1 family. As to quaternary structure, interacts with CCR5 and GDE1.

It is found in the endosome membrane. May be involved in ER/Golgi transport and vesicular traffic. Plays a proapoptotic role in cerulenin-induced neuroblastoma apoptosis. This Mus musculus (Mouse) protein is PRA1 family protein 2 (Praf2).